Here is a 601-residue protein sequence, read N- to C-terminus: Elongation factor 4 (601 aa).

The tr-type G domain maps to 6–188 (DHIRNFSIVA…AIVHQLPPPR (183 aa)). GTP is bound by residues 18–23 (DHGKST) and 135–138 (NKVD).

It belongs to the TRAFAC class translation factor GTPase superfamily. Classic translation factor GTPase family. LepA subfamily.

Its subcellular location is the cell inner membrane. It catalyses the reaction GTP + H2O = GDP + phosphate + H(+). Functionally, required for accurate and efficient protein synthesis under certain stress conditions. May act as a fidelity factor of the translation reaction, by catalyzing a one-codon backward translocation of tRNAs on improperly translocated ribosomes. Back-translocation proceeds from a post-translocation (POST) complex to a pre-translocation (PRE) complex, thus giving elongation factor G a second chance to translocate the tRNAs correctly. Binds to ribosomes in a GTP-dependent manner. The chain is Elongation factor 4 from Mesorhizobium japonicum (strain LMG 29417 / CECT 9101 / MAFF 303099) (Mesorhizobium loti (strain MAFF 303099)).